A 722-amino-acid chain; its full sequence is Bifunctional UDP-N-acetylglucosamine 2-epimerase/N-acetylmannosamine kinase (722 aa).

UDP-binding residues include Arg-19, Ser-23, Arg-113, His-220, and Asn-253. CMP-N-acetyl-beta-neuraminate is bound by residues Lys-259, Glu-271, Lys-280, and His-281. The UDP site is built by Val-282, Ser-301, Ser-302, Glu-307, and Arg-321. The interval 406–722 is N-acetylmannosamine kinase; sequence TLSALAVDLG…VLDYTTRRIH (317 aa). Residue Asp-413 participates in Mg(2+) binding. Gly-416 is an an N-acyl-D-mannosamine 6-phosphate binding site. The ADP site is built by Thr-417, Asn-418, and Arg-420. An N-acyl-D-mannosamine 6-phosphate contacts are provided by Gly-476, Arg-477, Thr-489, Asn-516, Asp-517, and Gly-545. Residues Gly-476, Arg-477, Thr-489, Asn-516, and Asp-517 each contribute to the an N-acyl-D-mannosamine site. Asp-517 is a catalytic residue. An N-acyl-D-mannosamine-binding residues include Glu-566 and His-569. His-569 is an an N-acyl-D-mannosamine 6-phosphate binding site. His-569, Cys-579, Cys-581, and Cys-586 together coordinate Zn(2+). Glu-588 is an an N-acyl-D-mannosamine 6-phosphate binding site. Glu-588 contributes to the an N-acyl-D-mannosamine binding site.

In the N-terminal section; belongs to the UDP-N-acetylglucosamine 2-epimerase family. This sequence in the C-terminal section; belongs to the ROK (NagC/XylR) family. Homodimer. Homotetramer. Homohexamer. The hexameric form exhibits both enzyme activities, whereas the dimeric form only catalyzes the phosphorylation of N-acyl-D-mannosamine. Post-translationally, phosphorylated. Phosphorylation by PKC activates the UDP-N-acetylglucosamine 2-epimerase activity. Widely expressed. Highest expression in liver. Also found at high levels in lung, brain and kidney.

It is found in the cytoplasm. Its subcellular location is the cytosol. It catalyses the reaction UDP-N-acetyl-alpha-D-glucosamine + H2O = aldehydo-N-acetyl-D-mannosamine + UDP + H(+). The catalysed reaction is an N-acyl-D-mannosamine + ATP = an N-acyl-D-mannosamine 6-phosphate + ADP + H(+). Its pathway is amino-sugar metabolism; N-acetylneuraminate biosynthesis. Its activity is regulated as follows. The UDP-N-acetylglucosamine 2-epimerase activity, in contrast to the N-acetylmannosamine kinase activity, exhibits allosteric regulation by cytidine monophosphate-N-acetylneuraminic acid (CMP-Neu5Ac), the end product of neuraminic acid biosynthesis. Moreover, the activity is contingent upon the oligomeric state of the enzyme. The monomeric form is inactive, while the dimeric form selectively catalyzes the phosphorylation of N-acetylmannosamine. The hexameric form, on the other hand, demonstrates full proficiency in both enzyme activities. Furthermore, the UDP-N-acetylglucosamine 2-epimerase activity is increased by PKC-mediated phosphorylation. Functionally, bifunctional enzyme that possesses both UDP-N-acetylglucosamine 2-epimerase and N-acetylmannosamine kinase activities, and serves as the initiator of the biosynthetic pathway leading to the production of N-acetylneuraminic acid (NeuAc), a critical precursor in the synthesis of sialic acids. By catalyzing this pivotal and rate-limiting step in sialic acid biosynthesis, this enzyme assumes a pivotal role in governing the regulation of cell surface sialylation, playing a role in embryonic angiogenesis. Sialic acids represent a category of negatively charged sugars that reside on the surface of cells as terminal components of glycoconjugates and mediate important functions in various cellular processes, including cell adhesion, signal transduction, and cellular recognition. The sequence is that of Bifunctional UDP-N-acetylglucosamine 2-epimerase/N-acetylmannosamine kinase from Mus musculus (Mouse).